The chain runs to 80 residues: Small ribosomal subunit protein uS17 (80 aa).

It belongs to the universal ribosomal protein uS17 family. In terms of assembly, part of the 30S ribosomal subunit.

In terms of biological role, one of the primary rRNA binding proteins, it binds specifically to the 5'-end of 16S ribosomal RNA. The protein is Small ribosomal subunit protein uS17 of Brucella suis (strain ATCC 23445 / NCTC 10510).